The following is a 109-amino-acid chain: Mannose-specific lectin (109 aa).

In terms of domain architecture, Bulb-type lectin spans 25–109 (MQEDCNLVLY…ARWATGTNIH (85 aa)). Alpha-D-mannopyranose-binding residues include glutamine 26, aspartate 28, asparagine 30, tyrosine 34, aspartate 37, lysine 38, tryptophan 41, alanine 42, asparagine 44, glutamine 57, aspartate 59, asparagine 61, tyrosine 65, isoleucine 72, tryptophan 73, asparagine 76, asparagine 83, glutamine 89, aspartate 91, asparagine 93, tyrosine 97, and tryptophan 102. A disulfide bridge links cysteine 29 with cysteine 52.

In terms of assembly, homotetramer; antiparallel. In terms of tissue distribution, detected in bulbs (at protein level).

Its subcellular location is the secreted. With respect to regulation, strongly inhibited by alpha-1,6-linked mannotriose. Inhibited by various oligosaccharides of P.pastoris mannan including, Man(alpha-l,6)Man-alpha-O-Me, Man(alpha-l,2)Man, Man(alpha-l,3)Man-alpha-O-Me, Man(alpha-l,2)Man, alpha-1,2-linked mannotriose, and Man(alpha-1,6)Glc, in order of decreasing potency. Weakly inhibited by elsinotetraose. Not inhibited by maltose or nigerose. In terms of biological role, D-mannose-binding lectin which binds alpha-D-linked mannose. Displays a high affinity for alpha-(1-6)-mannose oligomers. Able to interact with both terminal and internal alpha-D-mannosyl residues. Displays antiviral activity and therefore may contribute to defense against infections. This chain is Mannose-specific lectin, found in Narcissus pseudonarcissus (Daffodil).